Reading from the N-terminus, the 198-residue chain is Small ribosomal subunit protein uS4 (198 aa).

In terms of domain architecture, S4 RNA-binding spans 91 to 154; sequence SRLDNVVYRL…KNLNIVQEAV (64 aa).

Belongs to the universal ribosomal protein uS4 family. In terms of assembly, part of the 30S ribosomal subunit. Contacts protein S5. The interaction surface between S4 and S5 is involved in control of translational fidelity.

In terms of biological role, one of the primary rRNA binding proteins, it binds directly to 16S rRNA where it nucleates assembly of the body of the 30S subunit. With S5 and S12 plays an important role in translational accuracy. The chain is Small ribosomal subunit protein uS4 from Onion yellows phytoplasma (strain OY-M).